A 432-amino-acid polypeptide reads, in one-letter code: Tol-Pal system protein TolB (432 aa).

Residues 1–29 form the signal peptide; it reads MMRNVWKSGLRRSAWIGLLMVLCVGVARA.

The protein belongs to the TolB family. As to quaternary structure, the Tol-Pal system is composed of five core proteins: the inner membrane proteins TolA, TolQ and TolR, the periplasmic protein TolB and the outer membrane protein Pal. They form a network linking the inner and outer membranes and the peptidoglycan layer.

Its subcellular location is the periplasm. Part of the Tol-Pal system, which plays a role in outer membrane invagination during cell division and is important for maintaining outer membrane integrity. The sequence is that of Tol-Pal system protein TolB from Ralstonia nicotianae (strain ATCC BAA-1114 / GMI1000) (Ralstonia solanacearum).